The following is a 246-amino-acid chain: Bis(5'-nucleosyl)-tetraphosphatase PrpE [asymmetrical] (246 aa).

The protein belongs to the PrpE family. The cofactor is Ni(2+).

It carries out the reaction P(1),P(4)-bis(5'-guanosyl) tetraphosphate + H2O = GMP + GTP + 2 H(+). Asymmetrically hydrolyzes Ap4p to yield AMP and ATP. In Bacillus cereus (strain AH820), this protein is Bis(5'-nucleosyl)-tetraphosphatase PrpE [asymmetrical].